Consider the following 334-residue polypeptide: Fructose-1,6-bisphosphatase class 1 (334 aa).

Mg(2+) is bound by residues Glu89, Asp112, Leu114, and Asp115. Substrate is bound by residues 115 to 118 (DGSS), Asn208, Tyr241, 259 to 261 (YLY), and Lys271. Glu277 serves as a coordination point for Mg(2+).

The protein belongs to the FBPase class 1 family. As to quaternary structure, homotetramer. Mg(2+) serves as cofactor.

The protein resides in the cytoplasm. It catalyses the reaction beta-D-fructose 1,6-bisphosphate + H2O = beta-D-fructose 6-phosphate + phosphate. It functions in the pathway carbohydrate biosynthesis; gluconeogenesis. This Pectobacterium atrosepticum (strain SCRI 1043 / ATCC BAA-672) (Erwinia carotovora subsp. atroseptica) protein is Fructose-1,6-bisphosphatase class 1.